Here is a 319-residue protein sequence, read N- to C-terminus: Transmembrane and ubiquitin-like domain-containing protein 2 (319 aa).

A helical membrane pass occupies residues 36-56 (VMVVAGVVALTLALVLAWLST). Disordered regions lie at residues 88–128 (VNQG…ARGE) and 145–165 (RQAG…DGSC). Residues 95–111 (PTEHPHPSGGNDDKAEE) show a composition bias toward basic and acidic residues. In terms of domain architecture, Ubiquitin-like spans 173 to 246 (INVRLKFLND…IHCHRSPPGA (74 aa)). The next 2 helical transmembrane spans lie at 264–284 (LGVN…GVVW) and 298–318 (ATIS…GMYG).

Its subcellular location is the membrane. This is Transmembrane and ubiquitin-like domain-containing protein 2 (Tmub2) from Mus musculus (Mouse).